A 340-amino-acid polypeptide reads, in one-letter code: Trimethylamine N-oxide transport system ATP-binding protein TmoW (340 aa).

Positions 32 to 268 (GRSFDDIRAD…PTTGYVAKFT (237 aa)) constitute an ABC transporter domain. Residue 64–71 (GLSGSGKS) participates in ATP binding.

Belongs to the ABC transporter superfamily. As to quaternary structure, the complex is probably composed of two ATP-binding proteins (TmoW), two transmembrane proteins (TmoV) and a solute-binding protein (TmoX).

It is found in the cell inner membrane. It catalyses the reaction a quaternary ammonium(out) + ATP + H2O = a quaternary ammonium(in) + ADP + phosphate + H(+). In terms of biological role, part of the ABC transporter complex TmoXWV involved in trimethylamine N-oxide (TMAO) import. Responsible for energy coupling to the transport system. Is specific for TMAO and essential for TMAO metabolism. This is Trimethylamine N-oxide transport system ATP-binding protein TmoW from Ruegeria pomeroyi (strain ATCC 700808 / DSM 15171 / DSS-3) (Silicibacter pomeroyi).